Consider the following 497-residue polypeptide: Cytochrome P450 71A16 (497 aa).

Residues 1–21 traverse the membrane as a helical segment; that stretch reads MEMMILISLCLTTFLTILLFF. Residue cysteine 439 participates in heme binding.

Belongs to the cytochrome P450 family. Heme is required as a cofactor.

The protein resides in the membrane. Possesses triterpene oxidizing activity. Catalyzes the C23 hydroxylation of marneral to form 23-hydroxymarneral. Catalyzes the C23 hydroxylation of marnerol to form 23-hydroxymarnerol. The sequence is that of Cytochrome P450 71A16 (CYP71A16) from Arabidopsis thaliana (Mouse-ear cress).